A 293-amino-acid polypeptide reads, in one-letter code: Small ribosomal subunit biogenesis GTPase RsgA 2 (293 aa).

The CP-type G domain occupies 63-223 (SNELVRPPIA…VADTPGFSVL (161 aa)). Residues 112-115 (TKVD) and 166-174 (GQSGVGKSS) contribute to the GTP site. Residues Cys-247, Cys-252, His-254, and Cys-260 each coordinate Zn(2+).

The protein belongs to the TRAFAC class YlqF/YawG GTPase family. RsgA subfamily. In terms of assembly, monomer. Associates with 30S ribosomal subunit, binds 16S rRNA. Zn(2+) is required as a cofactor.

It localises to the cytoplasm. One of several proteins that assist in the late maturation steps of the functional core of the 30S ribosomal subunit. Helps release RbfA from mature subunits. May play a role in the assembly of ribosomal proteins into the subunit. Circularly permuted GTPase that catalyzes slow GTP hydrolysis, GTPase activity is stimulated by the 30S ribosomal subunit. This chain is Small ribosomal subunit biogenesis GTPase RsgA 2, found in Oceanobacillus iheyensis (strain DSM 14371 / CIP 107618 / JCM 11309 / KCTC 3954 / HTE831).